Consider the following 1032-residue polypeptide: Protein phosphatase 1 regulatory subunit 12A (1032 aa).

Positions 35-38 match the KVKF motif motif; sequence KVKF. ANK repeat units follow at residues 39-68, 72-101, 105-134, 138-164, 198-227, and 231-260; these read DDGA…DINY, DGLT…NINQ, EGWI…HVGA, EGDT…RQGV, SGGT…DVNI, and DGWT…DMET. 2 positions are modified to (3S)-3-hydroxyasparagine; by HIF1AN: Asn67 and Asn100. Position 226 is a (3S)-3-hydroxyasparagine; by HIF1AN (Asn226). 2 disordered regions span residues 290 to 553 and 588 to 928; these read LHSE…HRSC and SSTS…RLEK. Residues 291 to 300 show a composition bias toward basic and acidic residues; it reads HSEKRDKKSP. The residue at position 299 (Ser299) is a Phosphoserine. Over residues 302–316 the composition is skewed to polar residues; it reads IESTANMENNQPQKT. Residues 318 to 340 are compositionally biased toward basic and acidic residues; that stretch reads KNKETLIIEPEKNASRIESLEQE. Positions 357–369 are enriched in acidic residues; it reads SEEDEEDDSESEA. Positions 383-399 are enriched in low complexity; it reads AHTASTQAAPAAVTTPT. Over residues 400-421 the composition is skewed to polar residues; it reads LSSNQGTPTSPVKKFPTSTTKI. Phosphoserine is present on residues Ser422 and Ser432. Residues 422-432 are compositionally biased toward basic and acidic residues; it reads SPKEEERKDES. Thr443 bears the Phosphothreonine mark. Ser445 bears the Phosphoserine mark. Tyr446 is modified (phosphotyrosine). The segment covering 469–480 has biased composition (low complexity); the sequence is RSASSPRLSSSL. Ser472 carries the phosphoserine; by NUAK1 modification. Ser473 carries the post-translational modification Phosphoserine; by CDK1. Residue Ser477 is modified to Phosphoserine. The span at 481–491 shows a compositional bias: basic and acidic residues; it reads DNKEKEKDNKG. 2 positions are modified to phosphoserine: Ser507 and Ser509. A compositionally biased stretch (polar residues) spans 540 to 551; it reads NSSINEGSTYHR. Ser601 bears the Phosphoserine mark. Residues 602–612 show a composition bias toward polar residues; it reads PAGTQSSTSNR. The span at 614 to 625 shows a compositional bias: basic and acidic residues; that stretch reads WAEDSTEKEKDS. Phosphoserine is present on Ser618. Over residues 633–661 the composition is skewed to low complexity; the sequence is LVAPTVVSAAASSTTALTTTTAGTLSSTS. Positions 674-683 are enriched in basic and acidic residues; that stretch reads VRDEESESQR. Residues 683 to 866 are interaction with ROCK2; it reads RKARSRQARQ…VSFWTQDSDE (184 aa). Positions 684–694 are enriched in basic residues; sequence KARSRQARQSR. Phosphoserine; by PKA and PKG; in vitro occurs at positions 693 and 696. Residue Thr697 is modified to Phosphothreonine; by ROCK1, ROCK2, CDC42BP, ZIPK/DAPK3 and RAF1. The segment covering 719-768 has biased composition (basic and acidic residues); it reads RTREQENEEKDKEEKEKQDKEKQEEKKESEVSREDEYKQKYSRTYDETYA. The span at 774–797 shows a compositional bias: low complexity; the sequence is STSSSSTPSSSSLSTLGSSLYASS. Residues 798–812 are compositionally biased toward polar residues; that stretch reads QLNRPNSLVGITSAY. Ser804 bears the Phosphoserine mark. Residues 816–842 are compositionally biased toward basic and acidic residues; the sequence is LTKDNEREGEKKEEEKEGEDKSQPKSI. Residues 843 to 854 show a composition bias toward basic residues; the sequence is RERRRPREKRRS. Ser854 is modified (phosphoserine; by ROCK2). A phosphoserine mark is found at Ser864 and Ser873. Residues 869-885 are compositionally biased toward basic and acidic residues; that stretch reads QERQSDTEDGSSKRDTQ. Residues 886 to 900 are compositionally biased toward low complexity; the sequence is TDSVSRYDSSSTSSS. Phosphoserine occurs at positions 905 and 910. A Phosphoserine; by NUAK1 modification is found at Ser912. Positions 916–928 are enriched in basic and acidic residues; it reads LEERKPYGSRLEK. Ser997 carries the post-translational modification Phosphoserine.

In terms of assembly, PP1 comprises a catalytic subunit, PPP1CA, PPP1CB or PPP1CC, and one or several targeting or regulatory subunits. PPP1R12A mediates binding to myosin. Interacts with ARHA and CIT. Binds PPP1R12B, ROCK1 and IL16. Interacts directly with PRKG1. Non-covalent dimer of 2 dimers; PRKG1-PRKG1 and PPP1R12A-PPP1R12A. Interacts with SMTNL1. Interacts with PPP1CB; the interaction is direct. Interacts (when phosphorylated at Ser-445, Ser-472 and Ser-910) with 14-3-3. Interacts with ROCK1 and ROCK2. Interacts with isoform 1 and isoform 2 of ZIPK/DAPK3. Interacts with RAF1. Interacts with HIF1AN. Interacts with NCKAP1L. Phosphorylated on upon DNA damage, probably by ATM or ATR. Phosphorylated by CIT (Rho-associated kinase). Phosphorylated cooperatively by ROCK1 and CDC42BP on Thr-697. In vitro, phosphorylation of Ser-696 by PKA and PKG appears to prevent phosphorylation of the inhibitory site Thr-697, probably mediated by PRKG1. May be phosphorylated at Thr-697 by DMPK; may inhibit the myosin phosphatase activity. Phosphorylated at Ser-473 by CDK1 during mitosis, creating docking sites for the POLO box domains of PLK1. Subsequently, PLK1 binds and phosphorylates PPP1R12A. As to expression, smooth muscle. Detected in aorta, portal vein, stomach, intestine, bladder and lung.

It localises to the cytoplasm. Its subcellular location is the cytoskeleton. The protein localises to the stress fiber. In terms of biological role, key regulator of protein phosphatase 1C (PPP1C). Mediates binding to myosin. As part of the PPP1C complex, involved in dephosphorylation of PLK1. Capable of inhibiting HIF1AN-dependent suppression of HIF1A activity. In Rattus norvegicus (Rat), this protein is Protein phosphatase 1 regulatory subunit 12A.